A 2130-amino-acid polypeptide reads, in one-letter code: MSASFTDDKILRKSSVVEGGEISEELKILEKEPEHEPSEVVIGNDDDVKDDVKDDVKDDVKDDVKDDVKDDLKDDVEDDTIAPNQFEEAIKKNKLDPQDQTAAGDSGRSQPDLSPRTTTGVVKPSSFETKDTDGHDSAEVVSGSATQDDDNRNMDHDPITLVGDKRKSELQEYIPQTEADKEETKDFDPAQEDLTSADKAGKDQTPKVSDASEAKIDSLPWGPETSTDAKLPWETEDTNSDNKTADPIPWEQGSSDEASKNDDNLPWESNKNDAPSSQADNDKLPWESDINDAPSSQAGDDNLPWDSNTNDAPSSQAGDGNLPWDSNTNDAPSSQAEDDKLPWESDINNDVPASQEDPENKESNDSTNVDDLFGGSHNIDFLKEIQKQEESKDTDEVLLDSSENTPSAQPSSQDQDTSQDMRNYSTTQTDISHSEENKLALQSKNVPKGENEKTTENSDIHRPQDTDHFDDLFQNDDHDFLQEVGSSDNKSDPFKFPPDNSAPENKDSDKFETQNKSLDFLEMDDDLLDDEFLEDDTTSQTQTLKSKSNKQTYLPSTTNPSTTPVVPTQEKPKGSAMNKKKNDAYDFPDSLIAHKFKPAARSTNKYAPGSSNHNSPPVASMPPKLHSPSMNAVGSVPVPNEKQATMSQPLSAAVSTQGLQKKSFFEDLPIPVQKQPVKPARAALPRSQMSQSISPTVNPAQPQLQKPVVNPYAKPAMNTVVSPPMNYAQPPGMPQVTNNRGGSHLPAGMVAPPPPSQITGNNNVLPHAQPQPFPNMQNQNLGQNTNSYAPSRKISNPSPNLINTALPKVQGAQSATSPYVPNAGPYAPSSHKRTSSRASSLIGAKSKEVNPYAPASINVPNAQQGISHGIMMPNTASPTAPPAVMNNSIHGRRRGVSNVKSNFYHKEQTAPKVENPNALLQRQFPIFNWSSSKNIAYLIPSAVTNTYNRTSESVNVTDIKYVLKDSHYLSTFPGPFNKLKTKKKDVEKWLESYNEFLIQNNTGMKQDEVLVSQILLALVRFNGDCKSDDFTKAACAVLNPSVDYANDNTHMDMNPISTLANAYRLDNTGINIIWSLLQIGNTEKALEFCLSKGDWALGLMIARFEGPEKFGKVASDYARTTFPFQKSQSKVHHLMPIMLKLFAGNFKSAIDDITNVQAEGEWFIQNWRELVSLVVINKPQHGHEFLCEFSKLLALSGQIIASQICLILAGLPLSSIPSQANGILFSVIGFGSHSFAYSETYEYAMQLSTTNIPPTGFAHLLPLKLKHAQVLADYGLFTESQKYCDAISSIIKATGRSSFFNPVAFQEFQNLLMRISQSGASDSGWFGSKKLTLDKMWDQLDKFIGGDESKAKSGENGTFSKFSPAVSRAPSSLDITSLNNHYPQTSPQVRPDHIRDPLVTTNSAPGTSSENSVLKSNGMSHSRPPPSLYSNNSTTSIQKYAPSSSQVTPKPTLTRNDQSFSSQQQVGNPVYESLQQSRMAPNNSSSQYLPMNQGQSENIKAPSKYSANPQKVYSNNNGSLPYMNPSAQFSSSSIASHQSLHMGISGVNANPLTSVKRPSISNSFSESHVNSNPISGHKHTSSLQSDISLDYPSEFKSMPKPASDNPIAPDTHSSLKRDTENVPETITESRESEKSSELRDSSNSLTMPSEEGHSTVEDSTLPQAPPPKGHSKPNIASSSVAPKKARARANPYAPGAVASRSGGNNKYGPQSSDKYTSKKENTSMLVDTPSDISYNDIFNYGGYKVPKKTEINDTETLHDRNEVKEAPNQESIDTKEEASKTNSYIYPEPPKVASTSQSRNINVDESFDGENINDHDFETSSLHTPNANVPASNLNNSFRTNEKESMFHPYQEGENKSRRTSNFGVDSSFGDFPIPGSPDLTTRANSVIGGPGGLFSSRLSQSQQSALYQQYEVQDDTVKEYIPVVDEEEDEDSEDESSKKEKRKKEEQERQARIEADRAKQRQDAVASQRNQTWWPGFLARKNDDKPKAIRAKLGEKNKFVYDEKLKRWIDKSIPLEEQLKSSAPPPPPAAKKKPTEGSSSSISKPSSSSTPLGPAKQDMAPPASNSSNSAPSLGPSQSRPSQSGPPPPAGPSLANAGLDDLLSLGGGPSSGRKTKKGPRRGYVNLLDQK.

Composition is skewed to basic and acidic residues over residues 27–38, 50–72, and 88–97; these read KILEKEPEHEPS, DDVK…KDDL, and EAIKKNKLDP. 9 disordered regions span residues 27 to 516, 532 to 585, 598 to 647, 810 to 842, 1347 to 1366, 1374 to 1519, 1558 to 1731, 1753 to 1997, and 2014 to 2130; these read KILE…TQNK, FLED…NDAY, PAAR…ATMS, QGAQ…SSLI, DESK…SPAV, DITS…NNGS, PSIS…TPSD, DTET…LGEK, and IPLE…LDQK. A compositionally biased stretch (polar residues) spans 98–120; the sequence is QDQTAAGDSGRSQPDLSPRTTTG. 4 stretches are compositionally biased toward basic and acidic residues: residues 128–138, 149–170, 178–188, and 199–216; these read ETKDTDGHDSA, DDNR…KSEL, EADKEETKDFD, and KAGK…EAKI. Polar residues-rich tracts occupy residues 267–279 and 293–335; these read WESN…SSQA and APSS…PSSQ. A compositionally biased stretch (basic and acidic residues) spans 380-395; it reads DFLKEIQKQEESKDTD. Low complexity predominate over residues 405–420; sequence TPSAQPSSQDQDTSQD. Over residues 421–431 the composition is skewed to polar residues; the sequence is MRNYSTTQTDI. 2 stretches are compositionally biased toward basic and acidic residues: residues 447 to 481 and 504 to 513; these read PKGE…HDFL and ENKDSDKFET. Residues 538 to 568 are compositionally biased toward low complexity; sequence TSQTQTLKSKSNKQTYLPSTTNPSTTPVVPT. Residues 601-617 are compositionally biased toward polar residues; sequence RSTNKYAPGSSNHNSPP. 5 stretches are compositionally biased toward polar residues: residues 1374 to 1388, 1399 to 1420, 1428 to 1498, 1505 to 1519, and 1559 to 1574; these read DITS…TSPQ, VTTN…NGMS, LYSN…QSEN, YSAN…NNGS, and SISN…SNPI. A compositionally biased stretch (basic and acidic residues) spans 1627-1640; it reads TESRESEKSSELRD. Polar residues-rich tracts occupy residues 1701-1714 and 1722-1731; these read SGGN…SSDK and TSMLVDTPSD. Over residues 1753–1779 the composition is skewed to basic and acidic residues; that stretch reads DTETLHDRNEVKEAPNQESIDTKEEAS. Polar residues-rich tracts occupy residues 1793–1803 and 1819–1839; these read ASTSQSRNINV and TSSL…NSFR. The segment covering 1840 to 1857 has biased composition (basic and acidic residues); that stretch reads TNEKESMFHPYQEGENKS. Low complexity predominate over residues 1896-1911; it reads SSRLSQSQQSALYQQY. The segment covering 1925–1935 has biased composition (acidic residues); sequence VDEEEDEDSED. Basic and acidic residues-rich tracts occupy residues 1936 to 1963 and 1981 to 1997; these read ESSK…KQRQ and RKND…LGEK. Low complexity-rich tracts occupy residues 2039–2050, 2061–2083, and 2092–2104; these read SSSSISKPSSSS, APPA…RPSQ, and PSLA…DLLS.

The protein belongs to the SEC16 family.

Its subcellular location is the endoplasmic reticulum membrane. Its function is as follows. Involved in the initiation of assembly of the COPII coat required for the formation of transport vesicles from the endoplasmic reticulum (ER) and the selection of cargo molecules. Also involved in autophagy. In Debaryomyces hansenii (strain ATCC 36239 / CBS 767 / BCRC 21394 / JCM 1990 / NBRC 0083 / IGC 2968) (Yeast), this protein is COPII coat assembly protein SEC16 (SEC16).